The chain runs to 444 residues: Acyl-CoA 6-desaturase (444 aa).

Residues 1–131 lie on the Cytoplasmic side of the membrane; it reads MGKGGNQGEG…DMNLFKTNHV (131 aa). One can recognise a Cytochrome b5 heme-binding domain in the interval 18–95; that stretch reads VPTFSWEEIQ…LKPLLIGELA (78 aa). Residues 132–152 traverse the membrane as a helical segment; it reads FFLLLLAHIIALESIAWFTVF. Topologically, residues 153 to 157 are lumenal; sequence YFGNG. A helical transmembrane segment spans residues 158 to 178; that stretch reads WIPTLITAFVLATSQAQAGWL. Topologically, residues 179-264 are cytoplasmic; that stretch reads QHDYGHLSVY…KYLPYNHQHE (86 aa). The Histidine box-1 motif lies at 180 to 184; it reads HDYGH. Residues 217–221 carry the Histidine box-2 motif; it reads HFQHH. A helical membrane pass occupies residues 265-285; the sequence is YFFLIGPPLLIPMYFQYQIIM. Residues 286 to 305 lie on the Lumenal side of the membrane; that stretch reads TMIVHKNWVDLAWAVSYYIR. A helical transmembrane segment spans residues 306–326; it reads FFITYIPFYGILGALLFLNFI. At 327–444 the chain is on the cytoplasmic side; sequence RFLESHWFVW…KLWLDAYLHK (118 aa). The short motif at 382-386 is the Histidine box-3 element; it reads QIEHH.

This sequence belongs to the fatty acid desaturase type 1 family. As to expression, expressed in a wide array of tissues, highest expression is found in liver followed by brain, lung, heart, and retina. A lower level is found in breast tumor when compared with normal tissues; lowest levels were found in patients with poor prognostic index.

Its subcellular location is the endoplasmic reticulum membrane. It carries out the reaction (9Z,12Z)-octadecadienoyl-CoA + 2 Fe(II)-[cytochrome b5] + O2 + 2 H(+) = (6Z,9Z,12Z)-octadecatrienoyl-CoA + 2 Fe(III)-[cytochrome b5] + 2 H2O. The enzyme catalyses (9Z,12Z,15Z)-octadecatrienoyl-CoA + 2 Fe(II)-[cytochrome b5] + O2 + 2 H(+) = (6Z,9Z,12Z,15Z)-octadecatetraenoyl-CoA + 2 Fe(III)-[cytochrome b5] + 2 H2O. It catalyses the reaction hexadecanoyl-CoA + 2 Fe(II)-[cytochrome b5] + O2 + 2 H(+) = (6Z)-hexadecenoyl-CoA + 2 Fe(III)-[cytochrome b5] + 2 H2O. The catalysed reaction is (9Z,12Z,15Z,18Z,21Z)-tetracosapentaenoyl-CoA + 2 Fe(II)-[cytochrome b5] + O2 + 2 H(+) = (6Z,9Z,12Z,15Z,18Z,21Z)-tetracosahexaenoyl-CoA + 2 Fe(III)-[cytochrome b5] + 2 H2O. It carries out the reaction (11E)-octadecenoyl-CoA + 2 Fe(II)-[cytochrome b5] + O2 + 2 H(+) = (6Z,11E)-octadecadienoyl-CoA + 2 Fe(III)-[cytochrome b5] + 2 H2O. The enzyme catalyses (11Z,14Z)-eicosadienoyl-CoA + 2 Fe(II)-[cytochrome b5] + O2 + 2 H(+) = (8Z,11Z,14Z)-eicosatrienoyl-CoA + 2 Fe(III)-[cytochrome b5] + 2 H2O. It catalyses the reaction (11Z,14Z,17Z)-eicosatrienoyl-CoA + 2 Fe(II)-[cytochrome b5] + O2 + 2 H(+) = (8Z,11Z,14Z,17Z)-eicosatetraenoyl-CoA + 2 Fe(III)-[cytochrome b5] + 2 H2O. The protein operates within lipid metabolism; polyunsaturated fatty acid biosynthesis. Involved in the biosynthesis of highly unsaturated fatty acids (HUFA) from the essential polyunsaturated fatty acids (PUFA) linoleic acid (LA) (18:2n-6) and alpha-linolenic acid (ALA) (18:3n-3) precursors, acting as a fatty acyl-coenzyme A (CoA) desaturase that introduces a cis double bond at carbon 6 of the fatty acyl chain. Catalyzes the first and rate limiting step in this pathway which is the desaturation of LA (18:2n-6) and ALA (18:3n-3) into gamma-linoleate (GLA) (18:3n-6) and stearidonate (18:4n-3), respectively. Subsequently, in the biosynthetic pathway of HUFA n-3 series, it desaturates tetracosapentaenoate (24:5n-3) to tetracosahexaenoate (24:6n-3), which is then converted to docosahexaenoate (DHA)(22:6n-3), an important lipid for nervous system function. Desaturates hexadecanate (palmitate) to produce 6Z-hexadecenoate (sapienate), a fatty acid unique to humans and major component of human sebum, that has been implicated in the development of acne and may have potent antibacterial activity. It can also desaturate (11E)-octadecenoate (trans-vaccenoate, the predominant trans fatty acid in human milk) at carbon 6 generating (6Z,11E)-octadecadienoate. In addition to Delta-6 activity, this enzyme exhibits Delta-8 activity with slight biases toward n-3 fatty acyl-CoA substrates. This is Acyl-CoA 6-desaturase from Homo sapiens (Human).